Reading from the N-terminus, the 201-residue chain is Anthranilate synthase component II (201 aa).

Positions 3–196 (DILLLDNIDS…LAWAQRKLEP (194 aa)) constitute a Glutamine amidotransferase type-1 domain. Position 57–59 (57–59 (GPG)) interacts with L-glutamine. Cysteine 84 acts as the Nucleophile; for GATase activity in catalysis. L-glutamine is bound by residues glutamine 88 and 134-135 (SL). Active-site for GATase activity residues include histidine 170 and glutamate 172.

In terms of assembly, tetramer of two components I and two components II.

It catalyses the reaction chorismate + L-glutamine = anthranilate + pyruvate + L-glutamate + H(+). The enzyme catalyses N-(5-phospho-beta-D-ribosyl)anthranilate + diphosphate = 5-phospho-alpha-D-ribose 1-diphosphate + anthranilate. It participates in amino-acid biosynthesis; L-tryptophan biosynthesis; L-tryptophan from chorismate: step 1/5. The protein operates within amino-acid biosynthesis; L-tryptophan biosynthesis; L-tryptophan from chorismate: step 2/5. The polypeptide is Anthranilate synthase component II (trpG-TRPD) (Shigella dysenteriae).